The following is a 324-amino-acid chain: o-succinylbenzoate synthase (324 aa).

The active-site Proton donor is the lysine 135. 3 residues coordinate Mg(2+): aspartate 163, glutamate 192, and aspartate 215. Catalysis depends on lysine 237, which acts as the Proton acceptor.

Belongs to the mandelate racemase/muconate lactonizing enzyme family. MenC type 1 subfamily. A divalent metal cation serves as cofactor.

The catalysed reaction is (1R,6R)-6-hydroxy-2-succinyl-cyclohexa-2,4-diene-1-carboxylate = 2-succinylbenzoate + H2O. The protein operates within quinol/quinone metabolism; 1,4-dihydroxy-2-naphthoate biosynthesis; 1,4-dihydroxy-2-naphthoate from chorismate: step 4/7. It participates in quinol/quinone metabolism; menaquinone biosynthesis. In terms of biological role, converts 2-succinyl-6-hydroxy-2,4-cyclohexadiene-1-carboxylate (SHCHC) to 2-succinylbenzoate (OSB). The chain is o-succinylbenzoate synthase from Aliivibrio salmonicida (strain LFI1238) (Vibrio salmonicida (strain LFI1238)).